Reading from the N-terminus, the 278-residue chain is Protein lyl-1 (278 aa).

Residues 1-46 form a disordered region; sequence MCPPQARAEVGSAMTEKTEMVCASSPAPAPPSKPASPGPLSTEEVD. Pro residues predominate over residues 27–37; sequence APAPPSKPASP. Residues 149–201 enclose the bHLH domain; the sequence is ARRVFTNSRERWRQQHVNGAFAELRKLLPTHPPDRKLSKNEVLRLAMKYIGFL. The tract at residues 212–278 is disordered; sequence LTSGPSAPGS…EQTSLSPEVR (67 aa). Polar residues predominate over residues 269–278; sequence EQTSLSPEVR. S274 bears the Phosphoserine mark.

As to quaternary structure, efficient DNA binding requires dimerization with another bHLH protein.

It is found in the nucleus. The protein is Protein lyl-1 (Lyl1) of Mus musculus (Mouse).